Consider the following 59-residue polypeptide: Potassium channel toxin alpha-KTx 1.2 (59 aa).

The signal sequence occupies residues 1 to 22; the sequence is MKILSVLLLALIICSIIDWSEG. Glutamine 23 is modified (pyrrolidone carboxylic acid). Cystine bridges form between cysteine 29/cysteine 50, cysteine 35/cysteine 55, and cysteine 39/cysteine 57. The segment at 48–55 is interaction with Ca(2+)-activated K(+) channels; that stretch reads GKCMNKKC.

It belongs to the short scorpion toxin superfamily. Potassium channel inhibitor family. Alpha-KTx 01 subfamily. In terms of tissue distribution, expressed by the venom gland.

The protein resides in the secreted. Its function is as follows. Blocks calcium-activated potassium channels (Kd=43 nM on KCa1.1/KCNMA1). Has a potent presynaptic facilitatory action, with less effect on direct muscle stimulation. The sequence is that of Potassium channel toxin alpha-KTx 1.2 from Leiurus hebraeus (Hebrew deathstalker scorpion).